A 296-amino-acid chain; its full sequence is Pre-mRNA-splicing factor CWC23 (296 aa).

The J domain maps to 14–86; sequence DLYKLLELNY…AKKAEYDQWV (73 aa).

Belongs to the DnaJ family. As to quaternary structure, associated with the spliceosome.

It localises to the cytoplasm. Its subcellular location is the nucleus. Its function is as follows. Involved in pre-mRNA splicing. May be involved in endoplasmic reticulum-associated protein degradation (ERAD) and required for growth at low and high temperatures. The sequence is that of Pre-mRNA-splicing factor CWC23 (CWC23) from Candida glabrata (strain ATCC 2001 / BCRC 20586 / JCM 3761 / NBRC 0622 / NRRL Y-65 / CBS 138) (Yeast).